A 491-amino-acid chain; its full sequence is Ketol-acid reductoisomerase (NADP(+)) (491 aa).

The region spanning 15–208 (AQLGKCRFMG…GGHRAGVLES (194 aa)) is the KARI N-terminal Rossmann domain. NADP(+) is bound by residues 45–48 (CGAQ), Arg-68, Arg-76, Ser-78, and 108–110 (DKQ). The active site involves His-132. NADP(+) is bound at residue Gly-158. KARI C-terminal knotted domains lie at 209–344 (SFVA…TAPQ) and 345–484 (YEGK…MTDM). Asp-217, Glu-221, Glu-389, and Glu-393 together coordinate Mg(2+). Ser-414 provides a ligand contact to substrate.

This sequence belongs to the ketol-acid reductoisomerase family. It depends on Mg(2+) as a cofactor.

It catalyses the reaction (2R)-2,3-dihydroxy-3-methylbutanoate + NADP(+) = (2S)-2-acetolactate + NADPH + H(+). It carries out the reaction (2R,3R)-2,3-dihydroxy-3-methylpentanoate + NADP(+) = (S)-2-ethyl-2-hydroxy-3-oxobutanoate + NADPH + H(+). The protein operates within amino-acid biosynthesis; L-isoleucine biosynthesis; L-isoleucine from 2-oxobutanoate: step 2/4. Its pathway is amino-acid biosynthesis; L-valine biosynthesis; L-valine from pyruvate: step 2/4. Involved in the biosynthesis of branched-chain amino acids (BCAA). Catalyzes an alkyl-migration followed by a ketol-acid reduction of (S)-2-acetolactate (S2AL) to yield (R)-2,3-dihydroxy-isovalerate. In the isomerase reaction, S2AL is rearranged via a Mg-dependent methyl migration to produce 3-hydroxy-3-methyl-2-ketobutyrate (HMKB). In the reductase reaction, this 2-ketoacid undergoes a metal-dependent reduction by NADPH to yield (R)-2,3-dihydroxy-isovalerate. The sequence is that of Ketol-acid reductoisomerase (NADP(+)) from Salmonella typhimurium (strain LT2 / SGSC1412 / ATCC 700720).